Here is a 104-residue protein sequence, read N- to C-terminus: Large ribosomal subunit protein uL24 (104 aa).

The protein belongs to the universal ribosomal protein uL24 family. Part of the 50S ribosomal subunit.

One of two assembly initiator proteins, it binds directly to the 5'-end of the 23S rRNA, where it nucleates assembly of the 50S subunit. Functionally, one of the proteins that surrounds the polypeptide exit tunnel on the outside of the subunit. This Citrobacter koseri (strain ATCC BAA-895 / CDC 4225-83 / SGSC4696) protein is Large ribosomal subunit protein uL24.